The chain runs to 336 residues: Holliday junction branch migration complex subunit RuvB (336 aa).

Positions 4 to 184 (ADRLVAPGSI…FGIVQRLEFY (181 aa)) are large ATPase domain (RuvB-L). Residues Ile-23, Arg-24, Gly-65, Lys-68, Thr-69, Thr-70, 131 to 133 (EDY), Arg-174, Tyr-184, and Arg-221 contribute to the ATP site. Residue Thr-69 coordinates Mg(2+). The segment at 185 to 255 (QVADLQHIVS…VASQALDMLN (71 aa)) is small ATPAse domain (RuvB-S). The head domain (RuvB-H) stretch occupies residues 258–336 (AEGFDYMDRK…HFGITPPQMP (79 aa)). DNA-binding residues include Arg-294, Arg-313, and Arg-318.

Belongs to the RuvB family. Homohexamer. Forms an RuvA(8)-RuvB(12)-Holliday junction (HJ) complex. HJ DNA is sandwiched between 2 RuvA tetramers; dsDNA enters through RuvA and exits via RuvB. An RuvB hexamer assembles on each DNA strand where it exits the tetramer. Each RuvB hexamer is contacted by two RuvA subunits (via domain III) on 2 adjacent RuvB subunits; this complex drives branch migration. In the full resolvosome a probable DNA-RuvA(4)-RuvB(12)-RuvC(2) complex forms which resolves the HJ.

The protein resides in the cytoplasm. The catalysed reaction is ATP + H2O = ADP + phosphate + H(+). Its function is as follows. The RuvA-RuvB-RuvC complex processes Holliday junction (HJ) DNA during genetic recombination and DNA repair, while the RuvA-RuvB complex plays an important role in the rescue of blocked DNA replication forks via replication fork reversal (RFR). RuvA specifically binds to HJ cruciform DNA, conferring on it an open structure. The RuvB hexamer acts as an ATP-dependent pump, pulling dsDNA into and through the RuvAB complex. RuvB forms 2 homohexamers on either side of HJ DNA bound by 1 or 2 RuvA tetramers; 4 subunits per hexamer contact DNA at a time. Coordinated motions by a converter formed by DNA-disengaged RuvB subunits stimulates ATP hydrolysis and nucleotide exchange. Immobilization of the converter enables RuvB to convert the ATP-contained energy into a lever motion, pulling 2 nucleotides of DNA out of the RuvA tetramer per ATP hydrolyzed, thus driving DNA branch migration. The RuvB motors rotate together with the DNA substrate, which together with the progressing nucleotide cycle form the mechanistic basis for DNA recombination by continuous HJ branch migration. Branch migration allows RuvC to scan DNA until it finds its consensus sequence, where it cleaves and resolves cruciform DNA. This is Holliday junction branch migration complex subunit RuvB from Cronobacter sakazakii (strain ATCC BAA-894) (Enterobacter sakazakii).